A 391-amino-acid polypeptide reads, in one-letter code: Protein Wnt-2b (391 aa).

Intrachain disulfides connect cysteine 107–cysteine 118, cysteine 158–cysteine 166, cysteine 168–cysteine 188, cysteine 237–cysteine 251, and cysteine 239–cysteine 246. Asparagine 117 carries an N-linked (GlcNAc...) asparagine glycan. Residue serine 243 is the site of O-palmitoleoyl serine; by PORCN attachment. Asparagine 283 is a glycosylation site (N-linked (GlcNAc...) asparagine). 6 cysteine pairs are disulfide-bonded: cysteine 309–cysteine 340, cysteine 325–cysteine 335, cysteine 339–cysteine 379, cysteine 355–cysteine 370, cysteine 357–cysteine 367, and cysteine 362–cysteine 363.

The protein belongs to the Wnt family. Forms a soluble 1:1 complex with AFM; this prevents oligomerization and is required for prolonged biological activity. The complex with AFM may represent the physiological form in body fluids. Interacts with FZD4 and FZD5. In terms of processing, palmitoleoylation is required for efficient binding to frizzled receptors. Depalmitoleoylation leads to Wnt signaling pathway inhibition. In terms of tissue distribution, isoform 1 is expressed in adult heart, brain, placenta, lung, prostate, testis, ovary, small intestine and colon. In the adult brain, it is mainly found in the caudate nucleus, subthalamic nucleus and thalamus. Also detected in fetal brain, lung and kidney. Isoform 2 is expressed in fetal brain, fetal lung, fetal kidney, caudate nucleus, testis and cancer cell lines.

It is found in the secreted. Its subcellular location is the extracellular space. It localises to the extracellular matrix. In terms of biological role, ligand for members of the frizzled family of seven transmembrane receptors. Functions in the canonical Wnt/beta-catenin signaling pathway. Plays a redundant role in embryonic lung development. The protein is Protein Wnt-2b (WNT2B) of Homo sapiens (Human).